The sequence spans 260 residues: UPF0246 protein Bphyt_1375 (260 aa).

Belongs to the UPF0246 family.

The polypeptide is UPF0246 protein Bphyt_1375 (Paraburkholderia phytofirmans (strain DSM 17436 / LMG 22146 / PsJN) (Burkholderia phytofirmans)).